The sequence spans 398 residues: Tryptophan synthase beta chain (398 aa).

K92 carries the N6-(pyridoxal phosphate)lysine modification.

Belongs to the TrpB family. As to quaternary structure, tetramer of two alpha and two beta chains. It depends on pyridoxal 5'-phosphate as a cofactor.

The enzyme catalyses (1S,2R)-1-C-(indol-3-yl)glycerol 3-phosphate + L-serine = D-glyceraldehyde 3-phosphate + L-tryptophan + H2O. It participates in amino-acid biosynthesis; L-tryptophan biosynthesis; L-tryptophan from chorismate: step 5/5. Its function is as follows. The beta subunit is responsible for the synthesis of L-tryptophan from indole and L-serine. This is Tryptophan synthase beta chain from Nitrosospira multiformis (strain ATCC 25196 / NCIMB 11849 / C 71).